We begin with the raw amino-acid sequence, 515 residues long: SWI/SNF-related matrix-associated actin-dependent regulator of chromatin subfamily D member 1 (515 aa).

Residues M1–M128 form a disordered region. A compositionally biased stretch (gly residues) spans G14–G23. Positions A43 to D167 are interaction with ESR1, NR1H4, NR3C1, PGR and SMARCA4. Asymmetric dimethylarginine is present on residues R68 and R88. Residue K101 forms a Glycyl lysine isopeptide (Lys-Gly) (interchain with G-Cter in SUMO2) linkage. Over residues P103 to Q117 the composition is skewed to low complexity. The interaction with SMARCC1 and SMARCC2 stretch occupies residues I168–E474. Positions R180–T515 are necessary for GR/NR3C1-mediated remodeling and transcription from chromatin; required for GR/NR3C1 interaction with the BRG1/SMARCA4 complex in vivo. T203 carries the phosphothreonine modification. K223 is subject to N6-acetyllysine. The 78-residue stretch at Y290–P367 folds into the SWIB/MDM2 domain. A coiled-coil region spans residues A412–F440.

The protein belongs to the SMARCD family. In terms of assembly, component of the multiprotein chromatin-remodeling complexes SWI/SNF: SWI/SNF-A (BAF), SWI/SNF-B (PBAF) and related complexes. The canonical complex contains a catalytic subunit (either SMARCA4/BRG1/BAF190A or SMARCA2/BRM/BAF190B), and at least SMARCE1, ACTL6A/BAF53, SMARCC1/BAF155, SMARCC2/BAF170, and SMARCB1/SNF5/BAF47. Other subunits specific to each of the complexes may also be present permitting several possible combinations developmentally and tissue specific. Component of the BAF complex, which includes at least actin (ACTB), ARID1A/BAF250A, ARID1B/BAF250B, SMARCA2/BRM, SMARCA4/BRG1/BAF190A, ACTL6A/BAF53, ACTL6B/BAF53B, SMARCE1/BAF57, SMARCC1/BAF155, SMARCC2/BAF170, SMARCB1/SNF5/INI1, and one or more SMARCD1/BAF60A, SMARCD2/BAF60B, or SMARCD3/BAF60C. In muscle cells, the BAF complex also contains DPF3. Component of neural progenitors-specific chromatin remodeling complex (npBAF complex) composed of at least, ARID1A/BAF250A or ARID1B/BAF250B, SMARCD1/BAF60A, SMARCD3/BAF60C, SMARCA2/BRM/BAF190B, SMARCA4/BRG1/BAF190A, SMARCB1/BAF47, SMARCC1/BAF155, SMARCE1/BAF57, SMARCC2/BAF170, PHF10/BAF45A, ACTL6A/BAF53A and actin. Component of neuron-specific chromatin remodeling complex (nBAF complex) composed of at least, ARID1A/BAF250A or ARID1B/BAF250B, SMARCD1/BAF60A, SMARCD3/BAF60C, SMARCA2/BRM/BAF190B, SMARCA4/BRG1/BAF190A, SMARCB1/BAF47, SMARCC1/BAF155, SMARCE1/BAF57, SMARCC2/BAF170, DPF1/BAF45B, DPF3/BAF45C, ACTL6B/BAF53B and actin. Component of the SWI/SNF-B (PBAF) chromatin remodeling complex, at least composed of SMARCA4/BRG1, SMARCB1/BAF47/SNF5, ACTL6A/BAF53A or ACTL6B/BAF53B, SMARCE1/BAF57, SMARCD1/BAF60A, SMARCD2/BAF60B, perhaps SMARCD3/BAF60C, SMARCC1/BAF155, SMARCC2/BAF170, PBRM1/BAF180, ARID2/BAF200 and actin (ACTB). Component of SWI/SNF (GBAF) subcomplex, which includes at least BICRA or BICRAL (mutually exclusive), BRD9, SS18, SMARCA2/BRM, SMARCA4/BRG1/BAF190A, ACTL6A/BAF53, SMARCC1/BAF155, and SMARCD1/BAF60A. Specifically interacts with the VDR heterodimer complex. Interacts with ESR1, NR3C1, NR1H4, PGR, SMARCA4, SMARCC1 and SMARCC2. Interacts with DPF2. Interacts with FOS, FOSB, FOSL1 and FOSL2.

Its subcellular location is the nucleus. In terms of biological role, involved in transcriptional activation and repression of select genes by chromatin remodeling (alteration of DNA-nucleosome topology). Component of SWI/SNF chromatin remodeling complexes that carry out key enzymatic activities, changing chromatin structure by altering DNA-histone contacts within a nucleosome in an ATP-dependent manner. Belongs to the neural progenitors-specific chromatin remodeling complex (npBAF complex) and the neuron-specific chromatin remodeling complex (nBAF complex). During neural development a switch from a stem/progenitor to a postmitotic chromatin remodeling mechanism occurs as neurons exit the cell cycle and become committed to their adult state. The transition from proliferating neural stem/progenitor cells to postmitotic neurons requires a switch in subunit composition of the npBAF and nBAF complexes. As neural progenitors exit mitosis and differentiate into neurons, npBAF complexes which contain ACTL6A/BAF53A and PHF10/BAF45A, are exchanged for homologous alternative ACTL6B/BAF53B and DPF1/BAF45B or DPF3/BAF45C subunits in neuron-specific complexes (nBAF). The npBAF complex is essential for the self-renewal/proliferative capacity of the multipotent neural stem cells. The nBAF complex along with CREST plays a role regulating the activity of genes essential for dendrite growth. Has a strong influence on vitamin D-mediated transcriptional activity from an enhancer vitamin D receptor element (VDRE). May be a link between mammalian SWI-SNF-like chromatin remodeling complexes and the vitamin D receptor (VDR) heterodimer. Mediates critical interactions between nuclear receptors and the BRG1/SMARCA4 chromatin-remodeling complex for transactivation. Interacts with AKIRIN2. In Bos taurus (Bovine), this protein is SWI/SNF-related matrix-associated actin-dependent regulator of chromatin subfamily D member 1 (SMARCD1).